The primary structure comprises 163 residues: Probable chemoreceptor glutamine deamidase CheD (163 aa).

The protein belongs to the CheD family.

The enzyme catalyses L-glutaminyl-[protein] + H2O = L-glutamyl-[protein] + NH4(+). In terms of biological role, probably deamidates glutamine residues to glutamate on methyl-accepting chemotaxis receptors (MCPs), playing an important role in chemotaxis. The protein is Probable chemoreceptor glutamine deamidase CheD of Pyrococcus abyssi (strain GE5 / Orsay).